A 214-amino-acid chain; its full sequence is tRNA (guanine-N(7)-)-methyltransferase (214 aa).

The S-adenosyl-L-methionine site is built by Glu-43, Glu-68, Asn-99, and Asp-121. The active site involves Asp-121. Residues Lys-125, Asp-157, and 194 to 197 (TEYE) each bind substrate.

Belongs to the class I-like SAM-binding methyltransferase superfamily. TrmB family.

The catalysed reaction is guanosine(46) in tRNA + S-adenosyl-L-methionine = N(7)-methylguanosine(46) in tRNA + S-adenosyl-L-homocysteine. It participates in tRNA modification; N(7)-methylguanine-tRNA biosynthesis. In terms of biological role, catalyzes the formation of N(7)-methylguanine at position 46 (m7G46) in tRNA. The polypeptide is tRNA (guanine-N(7)-)-methyltransferase (Alkaliphilus metalliredigens (strain QYMF)).